The primary structure comprises 212 residues: Glycerol-3-phosphate acyltransferase (212 aa).

The next 5 helical transmembrane spans lie at 3 to 23 (ILLAALVAYLIGSVSFAVVVS), 51 to 71 (KAAILTLVGDAFKGWLAVWLA), 78 to 98 (DVAVAWVAIAVFLGHLYPVFF), 115 to 135 (AVHPVLGLATALTWLIVAFFF), and 139 to 159 (SLAALVAAVFAPLFDVFLFGT).

The protein belongs to the PlsY family. Probably interacts with PlsX.

It localises to the cell inner membrane. The catalysed reaction is an acyl phosphate + sn-glycerol 3-phosphate = a 1-acyl-sn-glycero-3-phosphate + phosphate. Its pathway is lipid metabolism; phospholipid metabolism. Catalyzes the transfer of an acyl group from acyl-phosphate (acyl-PO(4)) to glycerol-3-phosphate (G3P) to form lysophosphatidic acid (LPA). This enzyme utilizes acyl-phosphate as fatty acyl donor, but not acyl-CoA or acyl-ACP. This chain is Glycerol-3-phosphate acyltransferase, found in Burkholderia ambifaria (strain MC40-6).